The following is a 204-amino-acid chain: EVTKPETINYRTLKPEMDGLFCEKIFGPSKDWECHCGKYKRVRHRGIVCERCGVEVTESRVRRHRMGYIKLAAPVSHVWYLKGIPSYVAILLDIPLRDVEQIVYFNCYVVLDVGDHKDLKYKQLLTEDEWLEIEDEVYAEDSTIENEPVVGIGAEALKQLLEDLDLNQIAEELREEITNSKGQKRAKLIKRIRVIDNFLATNAK.

Zn(2+)-binding residues include C34, C36, C49, and C52.

It belongs to the RNA polymerase beta' chain family. RpoC1 subfamily. In terms of assembly, in cyanobacteria the RNAP catalytic core is composed of 2 alpha, 1 beta, 1 beta', 1 gamma and 1 omega subunit. When a sigma factor is associated with the core the holoenzyme is formed, which can initiate transcription. Zn(2+) is required as a cofactor.

The catalysed reaction is RNA(n) + a ribonucleoside 5'-triphosphate = RNA(n+1) + diphosphate. Its function is as follows. DNA-dependent RNA polymerase catalyzes the transcription of DNA into RNA using the four ribonucleoside triphosphates as substrates. The sequence is that of DNA-directed RNA polymerase subunit gamma (rpoC1) from Prochlorococcus marinus (strain DV1).